The chain runs to 332 residues: Ornithine carbamoyltransferase, catabolic (332 aa).

Carbamoyl phosphate contacts are provided by residues serine 60–threonine 63, glutamine 87, arginine 111, and histidine 138–glutamine 141. L-ornithine is bound by residues asparagine 170, aspartate 230, and serine 234–methionine 235. Residues cysteine 271–leucine 272 and arginine 316 contribute to the carbamoyl phosphate site.

It belongs to the aspartate/ornithine carbamoyltransferase superfamily. OTCase family.

It is found in the cytoplasm. The enzyme catalyses carbamoyl phosphate + L-ornithine = L-citrulline + phosphate + H(+). Its pathway is amino-acid degradation; L-arginine degradation via ADI pathway; carbamoyl phosphate from L-arginine: step 2/2. In terms of biological role, reversibly catalyzes the transfer of the carbamoyl group from carbamoyl phosphate (CP) to the N(epsilon) atom of ornithine (ORN) to produce L-citrulline. This Bacillus cereus (strain ATCC 14579 / DSM 31 / CCUG 7414 / JCM 2152 / NBRC 15305 / NCIMB 9373 / NCTC 2599 / NRRL B-3711) protein is Ornithine carbamoyltransferase, catabolic (arcB).